Reading from the N-terminus, the 432-residue chain is UPF0597 protein APJL_1638 (432 aa).

This sequence belongs to the UPF0597 family.

This is UPF0597 protein APJL_1638 from Actinobacillus pleuropneumoniae serotype 3 (strain JL03).